Reading from the N-terminus, the 775-residue chain is Endothelin-converting enzyme-like 1 (775 aa).

Topologically, residues 1 to 59 (MEPPYSLTAHYDEFQEVKYVSRCGAGGARGASLPPGFPLGAARSATGARSGLPRWNRRE) are cytoplasmic. The chain crosses the membrane as a helical; Signal-anchor for type II membrane protein span at residues 60–82 (VCLLSGLVFAAGLCAILAAMLAL). Topologically, residues 83-775 (KYLGPVAAGG…MNPAHKCSVW (693 aa)) are lumenal. The 678-residue stretch at 98–775 (GCPERKAFAR…MNPAHKCSVW (678 aa)) folds into the Peptidase M13 domain. 4 disulfide bridges follow: Cys-123–Cys-760, Cys-131–Cys-720, Cys-187–Cys-441, and Cys-649–Cys-772. 2 N-linked (GlcNAc...) asparagine glycosylation sites follow: Asn-255 and Asn-322. His-612 is a binding site for Zn(2+). The active site involves Glu-613. A Zn(2+)-binding site is contributed by His-616. An N-linked (GlcNAc...) asparagine glycan is attached at Asn-656. Residue Glu-672 coordinates Zn(2+). Asp-676 functions as the Proton donor in the catalytic mechanism.

The protein belongs to the peptidase M13 family. Zn(2+) serves as cofactor. N-glycosylated. As to expression, highly expressed in the CNS, in particular in putamen, spinal cord, medulla and subthalamic nucleus. A strong signal was also detected in uterine subepithelial cells and around renal blood vessels. Detected at lower levels in amygdala, caudate, thalamus, pancreas and skeletal muscle. Detected at very low levels in substantia nigra, cerebellum, cortex, corpus callosum and hippocampus.

It is found in the membrane. Its function is as follows. May contribute to the degradation of peptide hormones and be involved in the inactivation of neuronal peptides. The protein is Endothelin-converting enzyme-like 1 (ECEL1) of Homo sapiens (Human).